We begin with the raw amino-acid sequence, 751 residues long: Dual specificity tyrosine-phosphorylation-regulated kinase 1A (751 aa).

The segment covering 59-68 has biased composition (polar residues); it reads YNDQIQQPLP. Disordered stretches follow at residues 59–81 and 104–129; these read YNDQIQQPLPNQRRMPQTFRDPA and YAKKKRRHQQGQGDDSSHKKERKVYN. The Bipartite nuclear localization signal signature appears at 109-126; the sequence is RRHQQGQGDDSSHKKERK. In terms of domain architecture, Protein kinase spans 151–471; that stretch reads YEIDSLIGKG…PYYALQHSFF (321 aa). ATP-binding positions include 157-165, Lys180, and 230-233; these read IGKGSFGQV and FEML. The Proton acceptor role is filled by Asp279. Residues 477-493 show a composition bias toward polar residues; the sequence is EGTNTSNSVSTSPAMEQ. Disordered stretches follow at residues 477 to 532, 580 to 667, and 730 to 751; these read EGTN…HSGG, HVPS…GNQA, and GMDREDSPMTGVCVQQSPVASS. Positions 494–517 are enriched in low complexity; the sequence is SQSSGTTSSTSSSSGGSSGTSNSG. A histidine-rich domain (HRD) region spans residues 585–613; it reads QQNVPHHHGNGSHHHHHHHHHHHGQHVLS. Basic residues predominate over residues 589–609; that stretch reads PHHHGNGSHHHHHHHHHHHGQ. The span at 611–622 shows a compositional bias: polar residues; the sequence is VLSNRTRTRIYN. 2 stretches are compositionally biased toward low complexity: residues 623–633 and 642–660; these read SPSTSSSTQDS and SMTSLSSSTTSSSTSSSST. Polar residues predominate over residues 742-751; that stretch reads CVQQSPVASS.

This sequence belongs to the protein kinase superfamily. CMGC Ser/Thr protein kinase family. MNB/DYRK subfamily. Autophosphorylated on tyrosine residues.

The protein localises to the nucleus. The protein resides in the nucleus speckle. It carries out the reaction L-seryl-[protein] + ATP = O-phospho-L-seryl-[protein] + ADP + H(+). The enzyme catalyses L-threonyl-[protein] + ATP = O-phospho-L-threonyl-[protein] + ADP + H(+). It catalyses the reaction L-tyrosyl-[protein] + ATP = O-phospho-L-tyrosyl-[protein] + ADP + H(+). The catalysed reaction is [DNA-directed RNA polymerase] + ATP = phospho-[DNA-directed RNA polymerase] + ADP + H(+). In terms of biological role, dual-specificity kinase which possesses both serine/threonine and tyrosine kinase activities. Exhibits a substrate preference for proline at position P+1 and arginine at position P-3. Plays an important role in double-strand breaks (DSBs) repair following DNA damage. Mechanistically, phosphorylates RNF169 and increases its ability to block accumulation of TP53BP1 at the DSB sites thereby promoting homologous recombination repair (HRR). Also acts as a positive regulator of transcription by acting as a CTD kinase that mediates phosphorylation of the CTD (C-terminal domain) of the large subunit of RNA polymerase II (RNAP II) POLR2A. Modulates alternative splicing by phosphorylating the splice factor SRSF6. Phosphorylates SEPTIN4, SEPTIN5 and SF3B1. This is Dual specificity tyrosine-phosphorylation-regulated kinase 1A from Xenopus tropicalis (Western clawed frog).